The following is a 123-amino-acid chain: Ribonuclease P protein component (123 aa).

The protein belongs to the RnpA family. As to quaternary structure, consists of a catalytic RNA component (M1 or rnpB) and a protein subunit.

It catalyses the reaction Endonucleolytic cleavage of RNA, removing 5'-extranucleotides from tRNA precursor.. Its function is as follows. RNaseP catalyzes the removal of the 5'-leader sequence from pre-tRNA to produce the mature 5'-terminus. It can also cleave other RNA substrates such as 4.5S RNA. The protein component plays an auxiliary but essential role in vivo by binding to the 5'-leader sequence and broadening the substrate specificity of the ribozyme. The protein is Ribonuclease P protein component of Herpetosiphon aurantiacus (strain ATCC 23779 / DSM 785 / 114-95).